Reading from the N-terminus, the 333-residue chain is NADH-quinone oxidoreductase subunit H (333 aa).

The next 8 helical transmembrane spans lie at 15–35 (IALF…FVTY), 88–108 (YVLA…VLPF), 117–137 (IGVG…GVVA), 165–185 (LVMS…VDIV), 191–211 (VWFI…AVAE), 241–261 (FFML…TILF), 274–294 (IPGA…LIWF), and 313–333 (VLLP…AWFF).

Belongs to the complex I subunit 1 family. In terms of assembly, NDH-1 is composed of 14 different subunits. Subunits NuoA, H, J, K, L, M, N constitute the membrane sector of the complex.

Its subcellular location is the cell membrane. It catalyses the reaction a quinone + NADH + 5 H(+)(in) = a quinol + NAD(+) + 4 H(+)(out). NDH-1 shuttles electrons from NADH, via FMN and iron-sulfur (Fe-S) centers, to quinones in the respiratory chain. The immediate electron acceptor for the enzyme in this species is believed to be ubiquinone. Couples the redox reaction to proton translocation (for every two electrons transferred, four hydrogen ions are translocated across the cytoplasmic membrane), and thus conserves the redox energy in a proton gradient. This subunit may bind ubiquinone. The chain is NADH-quinone oxidoreductase subunit H from Geobacillus kaustophilus (strain HTA426).